Reading from the N-terminus, the 1013-residue chain is Endosome/lysosome-associated apoptosis and autophagy regulator 1 (1013 aa).

Positions 1-41 are cleaved as a signal peptide; sequence MAEPGHSHHLSARVRGRTERRIPRLWRLLLWAGTAFQVTQG. Topologically, residues 42-910 are extracellular; that stretch reads TGPELHACKE…ICKTIDFWLK (869 aa). N-linked (GlcNAc...) asparagine glycosylation is present at Asn-153. Disulfide bonds link Cys-278–Cys-295, Cys-308–Cys-330, and Cys-311–Cys-342. Residues Asn-404 and Asn-672 are each glycosylated (N-linked (GlcNAc...) asparagine). The MRH domain occupies 656-858; that stretch reads NDCTFSRNTP…LWESAAACPL (203 aa). 4 cysteine pairs are disulfide-bonded: Cys-658–Cys-704, Cys-714–Cys-739, Cys-808–Cys-844, and Cys-820–Cys-856. The helical transmembrane segment at 911–931 threads the bilayer; it reads VGISAGTCTAILLTVLTCYFW. At 932–1013 the chain is on the cytoplasmic side; the sequence is KKNQKLEYKY…TSSGGLDMDL (82 aa).

This sequence belongs to the ELAPOR family. Interacts with HSPA5; may regulate the function of HSPA5 in apoptosis and cell proliferation. As to expression, expressed in normal endometrium but overexpressed in endometroid tumors.

It is found in the cell membrane. It localises to the late endosome membrane. The protein resides in the golgi apparatus. Its subcellular location is the trans-Golgi network membrane. The protein localises to the lysosome membrane. It is found in the endoplasmic reticulum membrane. Functionally, may protect cells from cell death by inducing cytosolic vacuolization and up-regulating the autophagy pathway. May play a role in apoptosis and cell proliferation through its interaction with HSPA5. The protein is Endosome/lysosome-associated apoptosis and autophagy regulator 1 of Homo sapiens (Human).